We begin with the raw amino-acid sequence, 802 residues long: Aldehyde dehydrogenase family 16 member A1 (802 aa).

The interval S513 to V554 is disordered.

It belongs to the aldehyde dehydrogenase family. Interacts with SPG21.

The protein is Aldehyde dehydrogenase family 16 member A1 (Aldh16a1) of Rattus norvegicus (Rat).